The sequence spans 339 residues: Glycerol-3-phosphate dehydrogenase [NAD(P)+] (339 aa).

NADPH is bound by residues Ser15, Tyr16, His36, and Lys110. 3 residues coordinate sn-glycerol 3-phosphate: Lys110, Gly139, and Thr141. Residue Ala143 participates in NADPH binding. Residues Lys195, Asp248, Ser258, Arg259, and Asn260 each contribute to the sn-glycerol 3-phosphate site. Lys195 serves as the catalytic Proton acceptor. Position 259 (Arg259) interacts with NADPH. The NADPH site is built by Val283 and Glu285.

The protein belongs to the NAD-dependent glycerol-3-phosphate dehydrogenase family.

The protein localises to the cytoplasm. The catalysed reaction is sn-glycerol 3-phosphate + NAD(+) = dihydroxyacetone phosphate + NADH + H(+). It carries out the reaction sn-glycerol 3-phosphate + NADP(+) = dihydroxyacetone phosphate + NADPH + H(+). Its pathway is membrane lipid metabolism; glycerophospholipid metabolism. Catalyzes the reduction of the glycolytic intermediate dihydroxyacetone phosphate (DHAP) to sn-glycerol 3-phosphate (G3P), the key precursor for phospholipid synthesis. The polypeptide is Glycerol-3-phosphate dehydrogenase [NAD(P)+] (Pectobacterium carotovorum subsp. carotovorum (strain PC1)).